We begin with the raw amino-acid sequence, 339 residues long: NADH-quinone oxidoreductase subunit H (339 aa).

The next 9 membrane-spanning stretches (helical) occupy residues 10–30, 50–70, 82–102, 115–135, 161–181, 187–207, 235–255, 275–295, and 310–330; these read FPLI…ILCV, PNVV…KLLF, ILFI…WAVV, VGVL…IIAG, MGLV…SGII, IPWW…ISVL, MGFA…SAMT, IPGF…FLWI, and LGWK…SSVL.

It belongs to the complex I subunit 1 family. As to quaternary structure, NDH-1 is composed of 14 different subunits. Subunits NuoA, H, J, K, L, M, N constitute the membrane sector of the complex.

The protein localises to the cell inner membrane. The catalysed reaction is a quinone + NADH + 5 H(+)(in) = a quinol + NAD(+) + 4 H(+)(out). In terms of biological role, NDH-1 shuttles electrons from NADH, via FMN and iron-sulfur (Fe-S) centers, to quinones in the respiratory chain. The immediate electron acceptor for the enzyme in this species is believed to be ubiquinone. Couples the redox reaction to proton translocation (for every two electrons transferred, four hydrogen ions are translocated across the cytoplasmic membrane), and thus conserves the redox energy in a proton gradient. This subunit may bind ubiquinone. The sequence is that of NADH-quinone oxidoreductase subunit H from Rickettsia canadensis (strain McKiel).